Here is a 59-residue protein sequence, read N- to C-terminus: UPF0509 protein KPK_3153 (59 aa).

Belongs to the UPF0509 family.

The polypeptide is UPF0509 protein KPK_3153 (Klebsiella pneumoniae (strain 342)).